The sequence spans 211 residues: Probable nicotinate-nucleotide adenylyltransferase (211 aa).

The protein belongs to the NadD family.

It catalyses the reaction nicotinate beta-D-ribonucleotide + ATP + H(+) = deamido-NAD(+) + diphosphate. It functions in the pathway cofactor biosynthesis; NAD(+) biosynthesis; deamido-NAD(+) from nicotinate D-ribonucleotide: step 1/1. Its function is as follows. Catalyzes the reversible adenylation of nicotinate mononucleotide (NaMN) to nicotinic acid adenine dinucleotide (NaAD). The sequence is that of Probable nicotinate-nucleotide adenylyltransferase from Legionella pneumophila (strain Lens).